Consider the following 188-residue polypeptide: Probable manganese efflux pump MntP (188 aa).

A run of 5 helical transmembrane segments spans residues 3 to 23 (ITATVLLAFGMSMDAFAASIG), 66 to 86 (LEWNHWIAFVLLIFLGGRMII), 106 to 128 (WLLVTTAIATSLDAMAVGVGLAF), 143 to 163 (ATLIMSTLGMMVGRFIGPILG), and 168 to 188 (ILGGLVLIGIGVQILWTHFHG).

It belongs to the MntP (TC 9.B.29) family.

It is found in the cell inner membrane. In terms of biological role, probably functions as a manganese efflux pump. This Escherichia fergusonii (strain ATCC 35469 / DSM 13698 / CCUG 18766 / IAM 14443 / JCM 21226 / LMG 7866 / NBRC 102419 / NCTC 12128 / CDC 0568-73) protein is Probable manganese efflux pump MntP.